The chain runs to 796 residues: Protein translocase subunit SecA 2 (796 aa).

ATP contacts are provided by residues Q84, 102 to 106 (GEGKT), and D496.

It belongs to the SecA family. As to quaternary structure, monomer and homodimer. Part of the essential Sec protein translocation apparatus which comprises SecA, SecYEG and auxiliary proteins SecDF. Other proteins may also be involved.

It is found in the cell membrane. It localises to the cytoplasm. The catalysed reaction is ATP + H2O + cellular proteinSide 1 = ADP + phosphate + cellular proteinSide 2.. Its function is as follows. Part of the Sec protein translocase complex. Interacts with the SecYEG preprotein conducting channel. Has a central role in coupling the hydrolysis of ATP to the transfer of proteins into and across the cell membrane, serving as an ATP-driven molecular motor driving the stepwise translocation of polypeptide chains across the membrane. This is Protein translocase subunit SecA 2 from Staphylococcus aureus (strain MSSA476).